The sequence spans 701 residues: DUF724 domain-containing protein 6 (701 aa).

Disordered stretches follow at residues 299-353 (MKTK…KRAN) and 374-452 (VEPV…DESC). Over residues 326 to 340 (LNLEKSAETLTKAES) the composition is skewed to basic and acidic residues. A compositionally biased stretch (polar residues) spans 381 to 399 (RVRTATPLKQTKADTQGKS). Composition is skewed to basic and acidic residues over residues 403 to 412 (KTLEPMRDEN), 421 to 430 (KVLEEKNSEK), and 437 to 449 (RQEE…KETD). Residues 514–700 (LPFAKKSPFW…LEFQSTASAP (187 aa)) form the DUF724 domain. Positions 626–670 (LEKKIEAGEIEGHTYEEEMAELELKILELKRQQVVAKEMKEATDK) form a coiled coil.

Expressed in roots, stems and flowers.

The protein resides in the nucleus. May be involved in the polar growth of plant cells via transportation of RNAs. In Arabidopsis thaliana (Mouse-ear cress), this protein is DUF724 domain-containing protein 6.